Reading from the N-terminus, the 194-residue chain is Cation channel sperm-associated auxiliary subunit zeta (194 aa).

As to quaternary structure, component of the CatSper complex or CatSpermasome composed of the core pore-forming members CATSPER1, CATSPER2, CATSPER3 and CATSPER4 as well as auxiliary members CATSPERB, CATSPERG2, CATSPERD, CATSPERE, CATSPERZ, C2CD6/CATSPERT, SLCO6C1, TMEM249, TMEM262 and EFCAB9. HSPA1 may be an additional auxiliary complex member. The core complex members CATSPER1, CATSPER2, CATSPER3 and CATSPER4 form a heterotetrameric channel. The auxiliary CATSPERB, CATSPERG2, CATSPERD and CATSPERE subunits form a pavilion-like structure over the pore which stabilizes the complex through interactions with CATSPER4, CATSPER3, CATSPER1 and CATSPER2 respectively. SLCO6C1 interacts with CATSPERE and TMEM262/CATSPERH interacts with CATSPERB, further stabilizing the complex. C2CD6/CATSPERT interacts at least with CATSPERD and is required for targeting the CatSper complex in the flagellar membrane. Interacts with EFCAB9; the interaction is direct, Ca(2+)-dependent and connects EFCAB9 with the CatSper complex. Dissociates from EFCAB9 at elevated pH. As to expression, testis-specific. Expressed in adult but not in fetal testis. Not expressed in ovary. Within testis, expression is restricted to spermatids.

The protein localises to the cell projection. It is found in the cilium. The protein resides in the flagellum membrane. Auxiliary component of the CatSper complex, a complex involved in sperm cell hyperactivation. Sperm cell hyperactivation is needed for sperm motility which is essential late in the preparation of sperm for fertilization. Required for a distribution of the CatSper complex in linear quadrilateral nanodomains along the flagellum, maximizing fertilization inside the mammalian female reproductive tract. Together with EFCAB9, associates with the CatSper channel pore and is required for the two-row structure of each single CatSper channel. This is Cation channel sperm-associated auxiliary subunit zeta from Mus musculus (Mouse).